A 505-amino-acid chain; its full sequence is ATP synthase subunit alpha (505 aa).

171–178 (GDRQTGKT) contributes to the ATP binding site.

Belongs to the ATPase alpha/beta chains family. As to quaternary structure, F-type ATPases have 2 components, CF(1) - the catalytic core - and CF(0) - the membrane proton channel. CF(1) has five subunits: alpha(3), beta(3), gamma(1), delta(1), epsilon(1). CF(0) has three main subunits: a(1), b(2) and c(9-12). The alpha and beta chains form an alternating ring which encloses part of the gamma chain. CF(1) is attached to CF(0) by a central stalk formed by the gamma and epsilon chains, while a peripheral stalk is formed by the delta and b chains.

The protein resides in the cell inner membrane. It carries out the reaction ATP + H2O + 4 H(+)(in) = ADP + phosphate + 5 H(+)(out). Its function is as follows. Produces ATP from ADP in the presence of a proton gradient across the membrane. The alpha chain is a regulatory subunit. The chain is ATP synthase subunit alpha from Campylobacter curvus (strain 525.92).